Reading from the N-terminus, the 563-residue chain is Cytochrome b (563 aa).

A run of 12 helical transmembrane segments spans residues 36 to 61 (SYWL…LLYY), 81 to 104 (SVLL…HMFR), 119 to 141 (WVTG…SLVS), 193 to 220 (RLLG…ERYG), 255 to 276 (LSIV…ANIN), 326 to 345 (ILTI…LPFL), 358 to 379 (FWTW…WGYL), 387 to 409 (TSAQ…YLWP), 436 to 454 (ILLG…FNFI), 458 to 476 (TLIN…IYAL), 505 to 527 (IAFF…MWTL), and 539 to 557 (MDLG…LYHY). 2 residues coordinate heme: His-87 and His-101. The heme site is built by His-198 and His-212.

It belongs to the cytochrome b family. It is a component of at least 2 distinct terminal oxidases, the quinol oxidase (SoxABC) and the alternate quinol oxidase with the core components SoxM and a Rieske Fe-S protein.

Its subcellular location is the cell membrane. Functionally, binds 2 heme groups (b586 and b606) which are not covalently bound to the protein. The protein is Cytochrome b (soxC) of Sulfolobus acidocaldarius (strain ATCC 33909 / DSM 639 / JCM 8929 / NBRC 15157 / NCIMB 11770).